A 176-amino-acid chain; its full sequence is Probable RNA-binding protein EIF1AD (176 aa).

In terms of domain architecture, S1-like spans 5–89 (TKKRYITNKV…VKGEIEYILD (85 aa)). Positions 117 to 128 (AKRGKANDKMID) are enriched in basic and acidic residues. Residues 117–176 (AKRGKANDKMIDDDMLPPSESEEEDDESEDEIEDTYDEDEETDDEEFDTYNPNRMQAPSK) are disordered. Residues 129 to 164 (DDMLPPSESEEEDDESEDEIEDTYDEDEETDDEEFD) are compositionally biased toward acidic residues. A compositionally biased stretch (polar residues) spans 166 to 176 (YNPNRMQAPSK).

This sequence belongs to the EIF1AD family.

In Caenorhabditis briggsae, this protein is Probable RNA-binding protein EIF1AD.